The chain runs to 315 residues: MEIRPLLMCFALCVVYATSKPTEKKERIHHDAPLSSREHDDAQGFDYDHDAFLGQKEAKSFDDLSPEESKRRLGVIVEKIDGDSDGFVTEVELRAWIKKAQKKYIYENVDRQWKDFDVNNDGMISWEEYRNVTYGTYLDDPEPDDGYNYQHMMARDERRFKMADQNRDQIANKEEFTAFLHPEEYDHMKDIVVLETMEDIDKNGDGFIDLNEYIGDMYNHEDEMEEPDWVATEREQFSEFRDKNKDGKMDREETMDWILPSDYDHAEAEAKHLVYESDSNKDGKLSKEEILNKYDLFVGSQATDFGEALVRHDEF.

Residues 1–19 form the signal peptide; it reads MEIRPLLMCFALCVVYATS. EF-hand domains lie at 68 to 103, 104 to 139, 151 to 186, 188 to 223, 229 to 264, and 265 to 300; these read ESKR…AQKK, YIYE…TYLD, HMMA…EEYD, MKDI…HEDE, WVAT…SDYD, and HAEA…FVGS. D81, D83, D85, E92, D117, N119, D121, M123, and E128 together coordinate Ca(2+). The N-linked (GlcNAc...) asparagine glycan is linked to N131. Residues D164, N166, D168, E175, D201, N203, D205, E212, D242, N244, D246, K248, E253, D278, N280, D282, K284, and E289 each coordinate Ca(2+). A Prevents secretion from ER motif is present at residues 312–315; that stretch reads HDEF.

It belongs to the CREC family. In terms of assembly, interacts with ggcx.

It localises to the endoplasmic reticulum membrane. The protein localises to the golgi apparatus. The protein resides in the secreted. It is found in the melanosome. Its subcellular location is the sarcoplasmic reticulum lumen. In terms of biological role, involved in regulation of vitamin K-dependent carboxylation of multiple N-terminal glutamate residues. Seems to inhibit gamma-carboxylase ggcx. Binds 7 calcium ions with a low affinity. The chain is Calumenin-A (calua) from Salmo salar (Atlantic salmon).